The primary structure comprises 204 residues: Ribosome maturation factor RimP (204 aa).

The segment at 177–204 (NFDESQFDEIQETEGEEADEAETPITRH) is disordered. A compositionally biased stretch (acidic residues) spans 181-198 (SQFDEIQETEGEEADEAE).

It belongs to the RimP family.

The protein resides in the cytoplasm. In terms of biological role, required for maturation of 30S ribosomal subunits. The chain is Ribosome maturation factor RimP from Cereibacter sphaeroides (strain ATCC 17025 / ATH 2.4.3) (Rhodobacter sphaeroides).